We begin with the raw amino-acid sequence, 381 residues long: Homoserine O-succinyltransferase (381 aa).

The region spanning 45 to 360 is the AB hydrolase-1 domain; sequence NAVLVCHALN…PHGHDAFLLD (316 aa). Serine 151 (nucleophile) is an active-site residue. Residue arginine 221 coordinates substrate. Active-site residues include aspartate 321 and histidine 354. Aspartate 355 is a binding site for substrate.

This sequence belongs to the AB hydrolase superfamily. MetX family. In terms of assembly, homodimer.

The protein resides in the cytoplasm. The enzyme catalyses L-homoserine + succinyl-CoA = O-succinyl-L-homoserine + CoA. It functions in the pathway amino-acid biosynthesis; L-methionine biosynthesis via de novo pathway; O-succinyl-L-homoserine from L-homoserine: step 1/1. Functionally, transfers a succinyl group from succinyl-CoA to L-homoserine, forming succinyl-L-homoserine. This is Homoserine O-succinyltransferase from Burkholderia mallei (strain NCTC 10247).